The sequence spans 466 residues: Probable WRKY transcription factor 32 (466 aa).

Disordered stretches follow at residues 1-45 (MEED…MEDL) and 140-166 (SVPTKQEQRSDSPVVNRLSVTPVPRTP). The span at 8-38 (DEAKTYTVEKSEKVEPEKDGLSQFRDEEKSL) shows a compositional bias: basic and acidic residues. Residues 162–226 (VPRTPARDGY…NKGLHTHEPP (65 aa)) constitute a DNA-binding region (WRKY 1). 4 residues coordinate Zn(2+): cysteine 193, cysteine 198, histidine 221, and histidine 223. The tract at residues 284 to 317 (HCENEAVEEPEPKRRLKKDNSQSSDSVSKPGKKN) is disordered. The WRKY 2 DNA-binding region spans 325 to 390 (GDVGICGDGY…YKGVHNHDMP (66 aa)). 4 residues coordinate Zn(2+): cysteine 356, cysteine 361, histidine 385, and histidine 387. The segment at 410–439 (TSMRTRTDDQVNIPTSSQCSVGRESEKQSK) is disordered. Over residues 419–429 (QVNIPTSSQCS) the composition is skewed to polar residues.

It belongs to the WRKY group I family.

It is found in the nucleus. In terms of biological role, transcription factor. Interacts specifically with the W box (5'-(T)TGAC[CT]-3'), a frequently occurring elicitor-responsive cis-acting element. The polypeptide is Probable WRKY transcription factor 32 (WRKY32) (Arabidopsis thaliana (Mouse-ear cress)).